Reading from the N-terminus, the 272-residue chain is Rhomboid-type serine protease B (272 aa).

5 consecutive transmembrane segments (helical) span residues 30–50 (IVLLVILAFWLLELQTIWSVV), 72–92 (PFIHVGFFHAFVNLLALTPLL), 103–123 (TAVALFIGPLSTFPAGIYILV), 133–153 (AVVGASVWIFLLLGSEAIKTF), and 164–184 (TKIPTWTSPLFACALVSIFVP). S138 functions as the Nucleophile in the catalytic mechanism. Residue N185 is glycosylated (N-linked (GlcNAc...) asparagine). Residues 186–206 (TSFLGHLSAIIIGYLLGLGYL) form a helical membrane-spanning segment. H191 is a catalytic residue.

Belongs to the peptidase S54 family.

It localises to the membrane. It carries out the reaction Cleaves type-1 transmembrane domains using a catalytic dyad composed of serine and histidine that are contributed by different transmembrane domains.. In terms of biological role, rhomboid protease that catalyzes intramembrane proteolysis. Required for transcription factor srbA activation by mediating its release from the membrane and thereby regulating its activity under hypoxic conditions. Essential for iron homeostasis and resistance to azoles such as voriconazole. Required for virulence in murine models of invasive pulmonary aspergillosis (IPA). The polypeptide is Rhomboid-type serine protease B (Aspergillus fumigatus (strain CBS 144.89 / FGSC A1163 / CEA10) (Neosartorya fumigata)).